Here is a 294-residue protein sequence, read N- to C-terminus: Putative ribose uptake protein RbsU (294 aa).

The next 10 helical transmembrane spans lie at Asn-2–Gly-24, Ile-34–Ile-56, Ile-63–Val-82, Met-92–Trp-114, Leu-121–Ser-140, Gly-150–Pro-172, Gly-179–Gly-198, Ile-218–Ala-235, Leu-242–Leu-264, and Ile-274–Ile-293.

It belongs to the GRP transporter (TC 2.A.7.5) family.

The protein localises to the cell membrane. Functionally, could be involved in the uptake of ribose. The sequence is that of Putative ribose uptake protein RbsU (rbsU) from Latilactobacillus sakei subsp. sakei (strain 23K) (Lactobacillus sakei subsp. sakei).